The chain runs to 146 residues: Aminoglycoside N(6')-acetyltransferase type 1 (146 aa).

Positions 1–146 constitute an N-acetyltransferase domain; the sequence is MNIMPISESQ…RVVYFKKNIG (146 aa). Substrate contacts are provided by tryptophan 22, histidine 25, tyrosine 66, and glutamate 79. 81–83 is a binding site for acetyl-CoA; it reads IFV. Substrate is bound at residue aspartate 115. Asparagine 120 contributes to the acetyl-CoA binding site. Glutamate 136 provides a ligand contact to substrate.

Homodimer.

The catalysed reaction is kanamycin B + acetyl-CoA = N(6')-acetylkanamycin B + CoA + H(+). In terms of biological role, catalyzes the transfer of an acetyl group from acetyl-CoA to the 6'-amino group of aminoglycoside molecules conferring resistance to antibiotics containing the purpurosamine ring including amikacin, kanamycin, tobramycin and netilmicin. This is Aminoglycoside N(6')-acetyltransferase type 1 from Acinetobacter baumannii.